Consider the following 545-residue polypeptide: Membrane protein insertase YidC (545 aa).

The next 4 helical transmembrane spans lie at isoleucine 350 to tyrosine 370, leucine 424 to valine 444, alanine 461 to leucine 481, and proline 498 to valine 518.

It belongs to the OXA1/ALB3/YidC family. Type 1 subfamily. As to quaternary structure, interacts with the Sec translocase complex via SecD. Specifically interacts with transmembrane segments of nascent integral membrane proteins during membrane integration.

The protein resides in the cell inner membrane. In terms of biological role, required for the insertion and/or proper folding and/or complex formation of integral membrane proteins into the membrane. Involved in integration of membrane proteins that insert both dependently and independently of the Sec translocase complex, as well as at least some lipoproteins. Aids folding of multispanning membrane proteins. The sequence is that of Membrane protein insertase YidC from Neisseria gonorrhoeae (strain ATCC 700825 / FA 1090).